A 211-amino-acid polypeptide reads, in one-letter code: Recombination protein RecR (211 aa).

Residues 70–85 (CRECFLITDREVCPIC) form a C4-type zinc finger. In terms of domain architecture, Toprim spans 93–190 (KFICVVEESQ…KITRTAYGFQ (98 aa)).

It belongs to the RecR family.

Its function is as follows. May play a role in DNA repair. It seems to be involved in an RecBC-independent recombinational process of DNA repair. It may act with RecF and RecO. The sequence is that of Recombination protein RecR from Aquifex aeolicus (strain VF5).